A 416-amino-acid polypeptide reads, in one-letter code: S-adenosylmethionine synthase (416 aa).

An ATP-binding site is contributed by H14. Residue D16 participates in Mg(2+) binding. E42 provides a ligand contact to K(+). Positions 55 and 98 each coordinate L-methionine. The tract at residues 98-108 is flexible loop; that stretch reads QSADINQGVDR. ATP is bound by residues 164–166, 240–241, D249, 255–256, A272, and K276; these read DAK, KF, and RK. L-methionine is bound at residue D249. K280 is a binding site for L-methionine.

This sequence belongs to the AdoMet synthase family. As to quaternary structure, homotetramer; dimer of dimers. Mg(2+) is required as a cofactor. It depends on K(+) as a cofactor.

It is found in the cytoplasm. The catalysed reaction is L-methionine + ATP + H2O = S-adenosyl-L-methionine + phosphate + diphosphate. It functions in the pathway amino-acid biosynthesis; S-adenosyl-L-methionine biosynthesis; S-adenosyl-L-methionine from L-methionine: step 1/1. Catalyzes the formation of S-adenosylmethionine (AdoMet) from methionine and ATP. The overall synthetic reaction is composed of two sequential steps, AdoMet formation and the subsequent tripolyphosphate hydrolysis which occurs prior to release of AdoMet from the enzyme. The protein is S-adenosylmethionine synthase of Flavobacterium johnsoniae (strain ATCC 17061 / DSM 2064 / JCM 8514 / BCRC 14874 / CCUG 350202 / NBRC 14942 / NCIMB 11054 / UW101) (Cytophaga johnsonae).